A 152-amino-acid polypeptide reads, in one-letter code: Transcriptional repressor NrdR (152 aa).

A zinc finger lies at 3-34; sequence CPYCNASDTKVIDSRLAAEGAQVRRRRSCNSC. Residues 49 to 139 enclose the ATP-cone domain; the sequence is PRIIKSSGKI…VYRDFQDIDA (91 aa).

Belongs to the NrdR family. Zn(2+) is required as a cofactor.

Functionally, negatively regulates transcription of bacterial ribonucleotide reductase nrd genes and operons by binding to NrdR-boxes. This is Transcriptional repressor NrdR from Psychrobacter arcticus (strain DSM 17307 / VKM B-2377 / 273-4).